A 58-amino-acid polypeptide reads, in one-letter code: Photosystem II reaction center protein K (58 aa).

The propeptide occupies 1–21 (MLNMISTFFDSSSNFSEAFLA). Residues 29–49 (IFDPIVDVMPIIPVFFLLLAF) form a helical membrane-spanning segment.

The protein belongs to the PsbK family. In terms of assembly, PSII is composed of 1 copy each of membrane proteins PsbA, PsbB, PsbC, PsbD, PsbE, PsbF, PsbH, PsbI, PsbJ, PsbK, PsbL, PsbM, PsbT, PsbX, PsbY, PsbZ, Psb30/Ycf12, at least 3 peripheral proteins of the oxygen-evolving complex and a large number of cofactors. It forms dimeric complexes.

It localises to the plastid. The protein resides in the chloroplast thylakoid membrane. Its function is as follows. One of the components of the core complex of photosystem II (PSII). PSII is a light-driven water:plastoquinone oxidoreductase that uses light energy to abstract electrons from H(2)O, generating O(2) and a proton gradient subsequently used for ATP formation. It consists of a core antenna complex that captures photons, and an electron transfer chain that converts photonic excitation into a charge separation. The sequence is that of Photosystem II reaction center protein K from Chaetosphaeridium globosum (Charophycean green alga).